Consider the following 500-residue polypeptide: Trans-cinnamate 4-monooxygenase (500 aa).

Residues 3–23 (ALLVEKVLLGLFVAAVLALVV) traverse the membrane as a helical segment. Residues 213–218 (RSRLSQ) and A302 contribute to the (E)-cinnamate site. Heme is bound at residue C442.

This sequence belongs to the cytochrome P450 family. Heme serves as cofactor. In terms of tissue distribution, expressed in roots and leaves.

The protein resides in the membrane. It carries out the reaction (E)-cinnamate + reduced [NADPH--hemoprotein reductase] + O2 = (E)-4-coumarate + oxidized [NADPH--hemoprotein reductase] + H2O + H(+). The protein operates within phenylpropanoid metabolism; trans-4-coumarate biosynthesis; trans-4-coumarate from trans-cinnamate: step 1/1. Catalyzes the first oxidative step of the phenylpropanoid pathway in higher plants by transforming trans-cinnamate into p-coumarate. The compounds formed by this pathway are essential components for lignification, pollination, and defense against ultraviolet light, predators and pathogens. The sequence is that of Trans-cinnamate 4-monooxygenase from Oryza sativa subsp. japonica (Rice).